The primary structure comprises 318 residues: CRISPR-associated protein Cas7/Csa2 1 (318 aa).

This sequence belongs to the CRISPR-associated protein Cas7/Cst2/DevR family. Subtype I-a/Apern subfamily. As to quaternary structure, part of the aCascade ribonucleoprotein complex, minimally composed of Csa2 and Cas5a, which binds crRNA. Other possible components of aCascade in strain P1 are Cas6b (SSO1437) and Csa5 (SSO1443), while SSO1399, Cas5b (SSO1400) and SSO1401 have sometimes been seen weakly associated. Csa2 is probably the major RNA-binding subunit. The Csa2-Cas5a-crRNA complex also binds target DNA homologous to crRNA, probably forming an R-loop. Purified aCascade forms a filament about 6 nm in width.

In terms of biological role, CRISPR (clustered regularly interspaced short palindromic repeat) is an adaptive immune system that provides protection against mobile genetic elements (viruses, transposable elements and conjugative plasmids). CRISPR clusters contain spacers, sequences complementary to antecedent mobile elements, and target invading nucleic acids. CRISPR clusters are transcribed and processed into CRISPR RNA (crRNA). This is CRISPR-associated protein Cas7/Csa2 1 (cas7a) from Saccharolobus solfataricus (strain ATCC 35092 / DSM 1617 / JCM 11322 / P2) (Sulfolobus solfataricus).